We begin with the raw amino-acid sequence, 212 residues long: Ribosomal RNA small subunit methyltransferase G (212 aa).

Residues G75, L80, 126-127, and R141 each bind S-adenosyl-L-methionine; that span reads AQ.

The protein belongs to the methyltransferase superfamily. RNA methyltransferase RsmG family.

The protein resides in the cytoplasm. Functionally, specifically methylates the N7 position of guanine in position 518 of 16S rRNA. This Beutenbergia cavernae (strain ATCC BAA-8 / DSM 12333 / CCUG 43141 / JCM 11478 / NBRC 16432 / NCIMB 13614 / HKI 0122) protein is Ribosomal RNA small subunit methyltransferase G.